Consider the following 318-residue polypeptide: Actin-related protein 2/3 complex subunit 2A (318 aa).

The tract at residues 297 to 318 (RSMNNKSFKRLGLNEVNHTNSK) is disordered.

It belongs to the ARPC2 family. Component of the Arp2/3 complex composed of ARP2, ARP3, ARPC1/p41-ARC, ARPC2/p34-ARC, ARPC3/p21-ARC, ARPC4/p20-ARC and ARPC5/p16-ARC. Interacts with ARPC4. Expressed at low levels in all tissues with a relatively highest expression in inflorescences.

The protein resides in the cytoplasm. It localises to the cytoskeleton. The protein localises to the cell projection. Its function is as follows. Functions as actin-binding component of the Arp2/3 complex which is involved in regulation of actin polymerization and together with an activating nucleation-promoting factor (NPF) mediates the formation of branched actin networks. Seems to contact the mother actin filament. Arp2/3 complex plays a critical role in the control of cell morphogenesis via the modulation of cell polarity development. This Arabidopsis thaliana (Mouse-ear cress) protein is Actin-related protein 2/3 complex subunit 2A (ARPC2A).